Consider the following 282-residue polypeptide: Bis(5'-nucleosyl)-tetraphosphatase, symmetrical (282 aa).

This sequence belongs to the Ap4A hydrolase family.

It carries out the reaction P(1),P(4)-bis(5'-adenosyl) tetraphosphate + H2O = 2 ADP + 2 H(+). In terms of biological role, hydrolyzes diadenosine 5',5'''-P1,P4-tetraphosphate to yield ADP. The sequence is that of Bis(5'-nucleosyl)-tetraphosphatase, symmetrical from Shigella dysenteriae serotype 1 (strain Sd197).